The sequence spans 388 residues: DNA replication and repair protein RecF (388 aa).

Residue 30–37 (GANGNGKT) coordinates ATP.

This sequence belongs to the RecF family.

Its subcellular location is the cytoplasm. Functionally, the RecF protein is involved in DNA metabolism; it is required for DNA replication and normal SOS inducibility. RecF binds preferentially to single-stranded, linear DNA. It also seems to bind ATP. This is DNA replication and repair protein RecF from Nocardia farcinica (strain IFM 10152).